Reading from the N-terminus, the 40-residue chain is 67 kDa serum albumin (40 aa).

The 40-residue stretch at 1-40 (DAEHKSEIVHRFNDLKEEKFKGAALITFAQFLHKKPEEEA) folds into the Albumin domain. His4 contacts Cu cation.

The protein belongs to the ALB/AFP/VDB family. As to expression, plasma.

Its subcellular location is the secreted. In terms of biological role, serum albumin, the main protein of plasma, has a good binding capacity for water, Ca(2+), Na(+), K(+), fatty acids, hormones, bilirubin and drugs. Its main function is the regulation of the colloidal osmotic pressure of blood. This is 67 kDa serum albumin from Trachemys scripta (Red-eared slider turtle).